We begin with the raw amino-acid sequence, 186 residues long: Inosine/xanthosine triphosphatase (186 aa).

A Mg(2+)-binding site is contributed by Q75.

It belongs to the YjjX NTPase family. As to quaternary structure, homodimer. Requires Mg(2+) as cofactor. Mn(2+) serves as cofactor.

The enzyme catalyses XTP + H2O = XDP + phosphate + H(+). It catalyses the reaction ITP + H2O = IDP + phosphate + H(+). Phosphatase that hydrolyzes non-canonical purine nucleotides such as XTP and ITP to their respective diphosphate derivatives. Probably excludes non-canonical purines from DNA/RNA precursor pool, thus preventing their incorporation into DNA/RNA and avoiding chromosomal lesions. This is Inosine/xanthosine triphosphatase from Shewanella baltica (strain OS195).